The chain runs to 152 residues: 3-dehydroquinate dehydratase (152 aa).

Tyrosine 22 serves as the catalytic Proton acceptor. 3 residues coordinate substrate: asparagine 73, histidine 79, and aspartate 86. Catalysis depends on histidine 99, which acts as the Proton donor. Residues 100–101 (LS) and arginine 110 each bind substrate.

The protein belongs to the type-II 3-dehydroquinase family. Homododecamer.

It carries out the reaction 3-dehydroquinate = 3-dehydroshikimate + H2O. It participates in metabolic intermediate biosynthesis; chorismate biosynthesis; chorismate from D-erythrose 4-phosphate and phosphoenolpyruvate: step 3/7. Catalyzes a trans-dehydration via an enolate intermediate. The polypeptide is 3-dehydroquinate dehydratase (Gemmatimonas aurantiaca (strain DSM 14586 / JCM 11422 / NBRC 100505 / T-27)).